Consider the following 271-residue polypeptide: Phosphonoacetaldehyde hydrolase (271 aa).

D12 serves as the catalytic Nucleophile. D12 and A14 together coordinate Mg(2+). Residue K54 is the Schiff-base intermediate with substrate of the active site. Residue D188 coordinates Mg(2+).

Belongs to the HAD-like hydrolase superfamily. PhnX family. As to quaternary structure, homodimer. It depends on Mg(2+) as a cofactor.

The enzyme catalyses phosphonoacetaldehyde + H2O = acetaldehyde + phosphate + H(+). Its function is as follows. Involved in phosphonate degradation. The chain is Phosphonoacetaldehyde hydrolase from Aliivibrio salmonicida (strain LFI1238) (Vibrio salmonicida (strain LFI1238)).